The chain runs to 358 residues: Alanine racemase, biosynthetic (358 aa).

The active-site Proton acceptor; specific for D-alanine is Lys34. N6-(pyridoxal phosphate)lysine is present on Lys34. A substrate-binding site is contributed by Arg130. Tyr254 (proton acceptor; specific for L-alanine) is an active-site residue. Substrate is bound at residue Met302.

Belongs to the alanine racemase family. Pyridoxal 5'-phosphate serves as cofactor.

It carries out the reaction L-alanine = D-alanine. Its pathway is amino-acid biosynthesis; D-alanine biosynthesis; D-alanine from L-alanine: step 1/1. It participates in cell wall biogenesis; peptidoglycan biosynthesis. Functionally, catalyzes the interconversion of L-alanine and D-alanine. Provides the D-alanine required for cell wall biosynthesis. This Pseudomonas aeruginosa (strain ATCC 15692 / DSM 22644 / CIP 104116 / JCM 14847 / LMG 12228 / 1C / PRS 101 / PAO1) protein is Alanine racemase, biosynthetic (alr).